A 138-amino-acid polypeptide reads, in one-letter code: Large ribosomal subunit protein uL16 (138 aa).

Belongs to the universal ribosomal protein uL16 family. In terms of assembly, part of the 50S ribosomal subunit.

Functionally, binds 23S rRNA and is also seen to make contacts with the A and possibly P site tRNAs. This chain is Large ribosomal subunit protein uL16, found in Chlamydia felis (strain Fe/C-56) (Chlamydophila felis).